A 154-amino-acid chain; its full sequence is 17.4 kDa class I heat shock protein (154 aa).

The 115-residue stretch at 40 to 154 folds into the sHSP domain; that stretch reads DAAAFAGARI…PDVKSIQITG (115 aa).

The protein belongs to the small heat shock protein (HSP20) family. As to quaternary structure, may form oligomeric structures.

The protein localises to the cytoplasm. The protein is 17.4 kDa class I heat shock protein (HSP17.4) of Oryza sativa subsp. japonica (Rice).